A 236-amino-acid chain; its full sequence is uncharacterized protein (236 aa).

The protein to M.tuberculosis Rv2557.

This is an uncharacterized protein from Mycobacterium tuberculosis (strain CDC 1551 / Oshkosh).